A 94-amino-acid polypeptide reads, in one-letter code: Co-chaperonin GroES (94 aa).

This sequence belongs to the GroES chaperonin family. As to quaternary structure, heptamer of 7 subunits arranged in a ring. Interacts with the chaperonin GroEL.

The protein localises to the cytoplasm. Together with the chaperonin GroEL, plays an essential role in assisting protein folding. The GroEL-GroES system forms a nano-cage that allows encapsulation of the non-native substrate proteins and provides a physical environment optimized to promote and accelerate protein folding. GroES binds to the apical surface of the GroEL ring, thereby capping the opening of the GroEL channel. This is Co-chaperonin GroES from Ehrlichia canis (strain Jake).